The primary structure comprises 255 residues: 6-phosphogluconolactonase 4 (255 aa).

It belongs to the glucosamine/galactosamine-6-phosphate isomerase family. 6-phosphogluconolactonase subfamily.

The protein resides in the cytoplasm. The enzyme catalyses 6-phospho-D-glucono-1,5-lactone + H2O = 6-phospho-D-gluconate + H(+). It functions in the pathway carbohydrate degradation; pentose phosphate pathway; D-ribulose 5-phosphate from D-glucose 6-phosphate (oxidative stage): step 2/3. In terms of biological role, involved in the pentose phosphate pathway via hydrolysis of 6-phosphogluconolactone to 6-phosphogluconate. The sequence is that of 6-phosphogluconolactonase 4 from Saccharomyces cerevisiae (strain ATCC 204508 / S288c) (Baker's yeast).